Here is a 150-residue protein sequence, read N- to C-terminus: D-galactose-binding lectin (150 aa).

D-galactose-binding residues include histidine 16 and glycine 19. Residue asparagine 26 is glycosylated (N-linked (GlcNAc...) asparagine). Residues 35–37 (DIH), histidine 64, and glycine 67 contribute to the D-galactose site. Asparagine 74 carries an N-linked (GlcNAc...) asparagine glycan. D-galactose-binding positions include 83–85 (DRH), histidine 108, and glycine 111. Asparagine 118 is a glycosylation site (N-linked (GlcNAc...) asparagine). 127–129 (DEH) contributes to the D-galactose binding site.

Oligomerizes in solution. In terms of processing, the N-terminus is blocked. As to expression, expressed in mantle. Expressed 51 and 1.6 fold in mantle and gonads, respectively, relative to that in hemocytes. Expressed at a much lower level in other tissues tested including gill, muscle and hepatopancreas.

With respect to regulation, hemagglutinating activity does not require Ca(2+) ions. Hemagglutinating activity is inhibited by porcine stomach mucin (PSM), bovine submaxillary mucin (BSM) and fetuin. Agglutination of V.proteolyticus bacteria is inhibited by D-galactose, but not by D-glucose. Fungal binding is inhibited by D-galactose, but not by pathogen-associated molecular patterns (PAMPs) including lipopolysaccharide (LPS), peptidoglycan and beta-glucan. D-galactose-binding lectin. Binds both alpha and beta anomer of galactose (Gal). Binds strongly to branched beta-Gal-terminated glycans and weakly to unbranched glycans with alpha-Gal on the end of chains. Has strong affinity for both Gal and GalNAc. Binds glycoproteins containing mucin-type chains. Has hemagglutinating activity towards human group A erythrocytes. Has hemagglutinating activity towards rabbit erythrocytes. Agglutinates V.proteolyticus bacteria. Binds strongly to fungi including species from genera Aspergillus, Alternaria, Fusarium and Haematonectria, and to a lesser extent to fungi from genera Trichoderma. Decreases conidia germination and hyphal growth of fungi. At high concentration, stimulates secretion of cytokines TNF-alpha and IFN-gamma from human peripheral blood cells, and at low concentration reduces hyperexpression of cytokine IL-10 in these cells, indicative of immunomodulatory capability. However, has no effect on IL-4 production. Recognizes pathogen-associated molecular patterns (PAMPs) and binds to peptidoglycan from S.aureus, but has only little binding to beta-1,3-glucan from E.gracilis and lipopolysaccharide (LPS) from E.coli. May be involved in innate immunity acting as an antibacterial or antifungal agent recognizing carbohydrate ligands on the surface of pathogens. The polypeptide is D-galactose-binding lectin (Mytilus trossulus (Blue mussel)).